Consider the following 86-residue polypeptide: Insulin (86 aa).

3 cysteine pairs are disulfide-bonded: C7–C72, C19–C85, and C71–C76. The propeptide at 33 to 63 is c peptide; it reads EAEDPQVGEVELGGGPGLGGLQPLALAGPQQ.

This sequence belongs to the insulin family. Heterodimer of a B chain and an A chain linked by two disulfide bonds.

The protein localises to the secreted. Its function is as follows. Insulin decreases blood glucose concentration. It increases cell permeability to monosaccharides, amino acids and fatty acids. It accelerates glycolysis, the pentose phosphate cycle, and glycogen synthesis in liver. This chain is Insulin (INS), found in Equus caballus (Horse).